A 190-amino-acid polypeptide reads, in one-letter code: DNA-binding transcriptional repressor TetR (190 aa).

Residues 6–66 enclose the HTH tetR-type domain; that stretch reads ETRSAALLAV…AALDAHDASF (61 aa). The H-T-H motif DNA-binding region spans 29–48; it reads SMDSVAALAHASKTTIYRRW.

As to quaternary structure, homodimer.

Functionally, binds to its own palindromic promoter and represses transcription of its operon; addition of tetracycline or doxycycline (but not tigecycline) interferes with DNA binding. Addition of TetX to the DNA-TetR-antibiotic complex restores DNA binding. This Mycobacteroides abscessus (strain ATCC 19977 / DSM 44196 / CCUG 20993 / CIP 104536 / JCM 13569 / NCTC 13031 / TMC 1543 / L948) (Mycobacterium abscessus) protein is DNA-binding transcriptional repressor TetR.